Reading from the N-terminus, the 177-residue chain is Ribulose bisphosphate carboxylase small subunit, chloroplastic 5 (177 aa).

Residues M1–S56 constitute a chloroplast transit peptide.

The protein belongs to the RuBisCO small chain family. In terms of assembly, heterohexadecamer of 8 large and 8 small subunits.

The protein localises to the plastid. It is found in the chloroplast. In terms of biological role, ruBisCO catalyzes two reactions: the carboxylation of D-ribulose 1,5-bisphosphate, the primary event in carbon dioxide fixation, as well as the oxidative fragmentation of the pentose substrate. Both reactions occur simultaneously and in competition at the same active site. Although the small subunit is not catalytic it is essential for maximal activity. In Lemna gibba (Swollen duckweed), this protein is Ribulose bisphosphate carboxylase small subunit, chloroplastic 5.